We begin with the raw amino-acid sequence, 127 residues long: Protein ApaG (127 aa).

The region spanning Lys-3–His-127 is the ApaG domain.

This is Protein ApaG from Azoarcus sp. (strain BH72).